The sequence spans 333 residues: Transcription initiation factor IIB (333 aa).

Residues 33-64 (EVYRCPICGNDRFVYNYERGEIVCIVCGAVVQ) form a TFIIB-type zinc finger. Residues cysteine 37, cysteine 40, cysteine 56, and cysteine 59 each contribute to the Zn(2+) site. 2 repeat units span residues 149–232 (QELE…LREL) and 243–324 (LYIS…ELAK).

Belongs to the TFIIB family.

Functionally, stabilizes TBP binding to an archaeal box-A promoter. Also responsible for recruiting RNA polymerase II to the pre-initiation complex (DNA-TBP-TFIIB). The protein is Transcription initiation factor IIB of Pyrobaculum islandicum (strain DSM 4184 / JCM 9189 / GEO3).